The primary structure comprises 284 residues: Diaminopimelate epimerase (284 aa).

2 residues coordinate substrate: Asn14 and Asn67. Cys76 functions as the Proton donor in the catalytic mechanism. Residues 77 to 78, Asn166, Asn199, and 217 to 218 contribute to the substrate site; these read GN and ER. Cys226 functions as the Proton acceptor in the catalytic mechanism. Residue 227-228 coordinates substrate; the sequence is GT.

It belongs to the diaminopimelate epimerase family. As to quaternary structure, homodimer.

It is found in the cytoplasm. It catalyses the reaction (2S,6S)-2,6-diaminopimelate = meso-2,6-diaminopimelate. It participates in amino-acid biosynthesis; L-lysine biosynthesis via DAP pathway; DL-2,6-diaminopimelate from LL-2,6-diaminopimelate: step 1/1. In terms of biological role, catalyzes the stereoinversion of LL-2,6-diaminopimelate (L,L-DAP) to meso-diaminopimelate (meso-DAP), a precursor of L-lysine and an essential component of the bacterial peptidoglycan. The protein is Diaminopimelate epimerase of Geobacillus sp. (strain WCH70).